Consider the following 703-residue polypeptide: MAQKHPGERGLCGVHHSGGSSLITSGSSVDPEILSFSGLRDSKETAPNGTRCLKEHSDPKCTQPPNPAHWSDPSHGPPRGPGPPREGGYPDESETCSEESGVDQELSRENETGYQEDGSPSFLPIPSACNCQGSPGVPEGTCSEEGDGSSSSFCHHCTSPALGEDEELEEEYDDEEPLKFPSDFSRVSSGKKPPSRRQRHRFLTKEDVRDSGRRDPKAPGRHRLARKRSQTDKRRGLGLWGVEELCQLGQAGFWWLIELLVLVGEYVETCGYLIYACRKLKGSDLDLFRIWVGVWARRLGGWARVMFQFLSQSFFSVAGLFIRLLRVVGAFLLLALALFLGCLQLGWRFLVGLGDRLGWRGKAAWLFSWLDSPALHHFLTLLKDSRPWQQLVRVIQWGWLELPWVKQRTQRQGTAHVASGRYCQPEEEVARLLTMAGVPEDELNPFHVLGVEATASDIELKKAYRQLAVMVHPDKNHHPRAEEAFKVLRAAWDIVSNPERRKEYEMKRMAENELSRSVNEFLSKLQDDLKEAMNTMMCSRCQGKHRRFEMDREPKSARYCAECNRLHPAEEGDFWAESSMLGLKITYFALMDGKVYDITEWAGCQRVGISPDTHRVPYHISFGSRVPGTSGRQRATPESPPADLQDFLSRIFQVPPGPMSNGNFFAAPHPGPGTTSTSRPNSSVPKGEAKPKRRKKVRRPFQR.

Disordered stretches follow at residues 1–150 (MAQK…DGSS) and 164–229 (EDEE…RKRS). The span at 17-28 (SGGSSLITSGSS) shows a compositional bias: low complexity. The span at 75–84 (HGPPRGPGPP) shows a compositional bias: pro residues. Acidic residues-rich tracts occupy residues 89–102 (YPDE…ESGV) and 164–176 (EDEE…DDEE). Basic residues predominate over residues 193–202 (PPSRRQRHRF). The span at 203-218 (LTKEDVRDSGRRDPKA) shows a compositional bias: basic and acidic residues. Basic residues predominate over residues 219 to 228 (PGRHRLARKR). Transmembrane regions (helical) follow at residues 254-274 (WWLI…GYLI), 305-325 (VMFQ…IRLL), and 327-347 (VVGA…QLGW). The J domain occupies 444-508 (NPFHVLGVEA…ERRKEYEMKR (65 aa)). Disordered regions lie at residues 622 to 643 (FGSR…PPAD) and 659 to 703 (MSNG…PFQR). A compositionally biased stretch (polar residues) spans 673–684 (GTTSTSRPNSSV). The segment covering 691–703 (PKRRKKVRRPFQR) has biased composition (basic residues).

Interacts with the FxxxFxxxF motif of DRD1 via its C-terminal domain. Detected in heart, brain, lung, liver, skeletal muscle, kidney and testis.

The protein localises to the endoplasmic reticulum membrane. Functionally, regulates the export of target proteins, such as DRD1, from the endoplasmic reticulum to the cell surface. The sequence is that of DnaJ homolog subfamily C member 14 (Dnajc14) from Rattus norvegicus (Rat).